The following is a 178-amino-acid chain: ATP-dependent protease subunit HslV (178 aa).

Thr-7 is a catalytic residue. Gly-162, Cys-165, and Thr-168 together coordinate Na(+).

This sequence belongs to the peptidase T1B family. HslV subfamily. A double ring-shaped homohexamer of HslV is capped on each side by a ring-shaped HslU homohexamer. The assembly of the HslU/HslV complex is dependent on binding of ATP.

It localises to the cytoplasm. The enzyme catalyses ATP-dependent cleavage of peptide bonds with broad specificity.. With respect to regulation, allosterically activated by HslU binding. Its function is as follows. Protease subunit of a proteasome-like degradation complex believed to be a general protein degrading machinery. The polypeptide is ATP-dependent protease subunit HslV (Burkholderia lata (strain ATCC 17760 / DSM 23089 / LMG 22485 / NCIMB 9086 / R18194 / 383)).